Here is an 862-residue protein sequence, read N- to C-terminus: DNA topoisomerase 3-beta-1 (862 aa).

In terms of domain architecture, Toprim spans 3–153 (TVLMVAEKPS…EKTVFRARFS (151 aa)). One can recognise a Topo IA-type catalytic domain in the interval 171-593 (DHNEALSVDA…HTLDIFKRKF (423 aa)). The O-(5'-phospho-DNA)-tyrosine intermediate role is filled by Y336. Positions 820–855 (HPMHRGGPGRRQGRGRGRGRRPPGKPNPRRPKDKMS) are disordered. Basic residues predominate over residues 821 to 851 (PMHRGGPGRRQGRGRGRGRRPPGKPNPRRPK).

It belongs to the type IA topoisomerase family. Highly expressed in testis.

It carries out the reaction ATP-independent breakage of single-stranded DNA, followed by passage and rejoining.. Releases the supercoiling and torsional tension of DNA introduced during the DNA replication and transcription by transiently cleaving and rejoining one strand of the DNA duplex. Introduces a single-strand break via transesterification at a target site in duplex DNA. The scissile phosphodiester is attacked by the catalytic tyrosine of the enzyme, resulting in the formation of a DNA-(5'-phosphotyrosyl)-enzyme intermediate and the expulsion of a 3'-OH DNA strand. The free DNA strand than undergoes passage around the unbroken strand thus removing DNA supercoils. Finally, in the religation step, the DNA 3'-OH attacks the covalent intermediate to expel the active-site tyrosine and restore the DNA phosphodiester backbone. Possesses negatively supercoiled DNA relaxing activity. The chain is DNA topoisomerase 3-beta-1 (Top3b) from Mus musculus (Mouse).